An 83-amino-acid polypeptide reads, in one-letter code: Cytochrome b559 subunit alpha (83 aa).

A helical transmembrane segment spans residues 21–35 (VIHSITIPSLFIAGW). Heme is bound at residue histidine 23.

Belongs to the PsbE/PsbF family. Heterodimer of an alpha subunit and a beta subunit. PSII is composed of 1 copy each of membrane proteins PsbA, PsbB, PsbC, PsbD, PsbE, PsbF, PsbH, PsbI, PsbJ, PsbK, PsbL, PsbM, PsbT, PsbX, PsbY, PsbZ, Psb30/Ycf12, at least 3 peripheral proteins of the oxygen-evolving complex and a large number of cofactors. It forms dimeric complexes. The cofactor is heme b.

It is found in the plastid. Its subcellular location is the chloroplast thylakoid membrane. Its function is as follows. This b-type cytochrome is tightly associated with the reaction center of photosystem II (PSII). PSII is a light-driven water:plastoquinone oxidoreductase that uses light energy to abstract electrons from H(2)O, generating O(2) and a proton gradient subsequently used for ATP formation. It consists of a core antenna complex that captures photons, and an electron transfer chain that converts photonic excitation into a charge separation. This is Cytochrome b559 subunit alpha from Chaetosphaeridium globosum (Charophycean green alga).